The chain runs to 324 residues: Glyoxylate/hydroxypyruvate reductase B (324 aa).

Residues Arg237 and Glu266 contribute to the active site. His285 functions as the Proton donor in the catalytic mechanism.

It belongs to the D-isomer specific 2-hydroxyacid dehydrogenase family. GhrB subfamily. Homodimer.

It is found in the cytoplasm. It carries out the reaction glycolate + NADP(+) = glyoxylate + NADPH + H(+). It catalyses the reaction (R)-glycerate + NAD(+) = 3-hydroxypyruvate + NADH + H(+). The catalysed reaction is (R)-glycerate + NADP(+) = 3-hydroxypyruvate + NADPH + H(+). Its function is as follows. Catalyzes the NADPH-dependent reduction of glyoxylate and hydroxypyruvate into glycolate and glycerate, respectively. The chain is Glyoxylate/hydroxypyruvate reductase B from Salmonella gallinarum (strain 287/91 / NCTC 13346).